The primary structure comprises 829 residues: Leucine--tRNA ligase (829 aa).

The 'HIGH' region signature appears at 40-50 (PYPSGNIHMGH). The 'KMSKS' region signature appears at 581-585 (KMSKS). Residue lysine 584 coordinates ATP.

Belongs to the class-I aminoacyl-tRNA synthetase family.

The protein localises to the cytoplasm. It catalyses the reaction tRNA(Leu) + L-leucine + ATP = L-leucyl-tRNA(Leu) + AMP + diphosphate. The protein is Leucine--tRNA ligase of Nitratidesulfovibrio vulgaris (strain DP4) (Desulfovibrio vulgaris).